Consider the following 343-residue polypeptide: tRNA N6-adenosine threonylcarbamoyltransferase (343 aa).

Fe cation contacts are provided by H120 and H124. Residues 142-146 (VVSGG), D175, G188, D192, and N281 each bind substrate. A Fe cation-binding site is contributed by D310.

The protein belongs to the KAE1 / TsaD family. Fe(2+) is required as a cofactor.

It localises to the cytoplasm. The enzyme catalyses L-threonylcarbamoyladenylate + adenosine(37) in tRNA = N(6)-L-threonylcarbamoyladenosine(37) in tRNA + AMP + H(+). Required for the formation of a threonylcarbamoyl group on adenosine at position 37 (t(6)A37) in tRNAs that read codons beginning with adenine. Is involved in the transfer of the threonylcarbamoyl moiety of threonylcarbamoyl-AMP (TC-AMP) to the N6 group of A37, together with TsaE and TsaB. TsaD likely plays a direct catalytic role in this reaction. The chain is tRNA N6-adenosine threonylcarbamoyltransferase from Bacillus anthracis.